We begin with the raw amino-acid sequence, 883 residues long: Phosphoenolpyruvate carboxylase (883 aa).

Active-site residues include His138 and Lys546.

The protein belongs to the PEPCase type 1 family. Requires Mg(2+) as cofactor.

It carries out the reaction oxaloacetate + phosphate = phosphoenolpyruvate + hydrogencarbonate. Forms oxaloacetate, a four-carbon dicarboxylic acid source for the tricarboxylic acid cycle. This chain is Phosphoenolpyruvate carboxylase, found in Salmonella dublin (strain CT_02021853).